Reading from the N-terminus, the 477-residue chain is Bifunctional protein HldE (477 aa).

Residues 1–318 (MQIQLPMFQN…RRAVQQEQGA (318 aa)) are ribokinase. Residue 195-198 (NLSE) coordinates ATP. Asp264 is an active-site residue. The interval 344-477 (FTNGCFDIIH…VEKIRKDQVK (134 aa)) is cytidylyltransferase.

It in the N-terminal section; belongs to the carbohydrate kinase PfkB family. In the C-terminal section; belongs to the cytidylyltransferase family. Homodimer.

It carries out the reaction D-glycero-beta-D-manno-heptose 7-phosphate + ATP = D-glycero-beta-D-manno-heptose 1,7-bisphosphate + ADP + H(+). It catalyses the reaction D-glycero-beta-D-manno-heptose 1-phosphate + ATP + H(+) = ADP-D-glycero-beta-D-manno-heptose + diphosphate. The protein operates within nucleotide-sugar biosynthesis; ADP-L-glycero-beta-D-manno-heptose biosynthesis; ADP-L-glycero-beta-D-manno-heptose from D-glycero-beta-D-manno-heptose 7-phosphate: step 1/4. Its pathway is nucleotide-sugar biosynthesis; ADP-L-glycero-beta-D-manno-heptose biosynthesis; ADP-L-glycero-beta-D-manno-heptose from D-glycero-beta-D-manno-heptose 7-phosphate: step 3/4. Catalyzes the phosphorylation of D-glycero-D-manno-heptose 7-phosphate at the C-1 position to selectively form D-glycero-beta-D-manno-heptose-1,7-bisphosphate. In terms of biological role, catalyzes the ADP transfer from ATP to D-glycero-beta-D-manno-heptose 1-phosphate, yielding ADP-D-glycero-beta-D-manno-heptose. The protein is Bifunctional protein HldE of Hahella chejuensis (strain KCTC 2396).